Here is a 457-residue protein sequence, read N- to C-terminus: Transcription factor CP2-like protein 1 (457 aa).

The segment at 1 to 52 (MLFWHTQPEHYNQHNSGSYLRDVLALPIFKQEEPQLSPENEARLPPLQYVLC) is mediate transcriptional repression. The Grh/CP2 DB domain maps to 43-280 (RLPPLQYVLC…PSPSYNGSPN (238 aa)). Disordered stretches follow at residues 219 to 245 (KPKG…KEKY) and 271 to 301 (PSPS…LPVG). Residues 221–245 (KGADRKQETDREKMEKRTAQEKEKY) show a composition bias toward basic and acidic residues. Positions 261-365 (PDVAYQVNSA…IRLFNAIKGR (105 aa)) are SAM2-like domain. Positions 271-281 (PSPSYNGSPNS) are enriched in polar residues.

Belongs to the grh/CP2 family. CP2 subfamily. In terms of assembly, forms homohexamers via its SAM-like domain. Interacts with MTA1; which is indispensable for TFCP2L1-mediated self-renewal-promoting effect and endoderm-inhibiting action.

The protein resides in the nucleus. Its function is as follows. Transcription factor that facilitates establishment and maintenance of pluripotency in embryonic stem cells (ESCs). With KLF2, acts as the major effector of self-renewal that mediates induction of pluripotency downstream of LIF/STAT3 and Wnt/beta-catenin signaling. Required for normal duct development in the salivary gland and kidney. Coordinates the development of the kidney collecting ducts intercalated (IC) and principal (PC) cells, which regulate acid-base and salt-water homeostasis, respectively. Regulates the expression of IC genes including subunits B1 and D2 of the V-ATPase complex, OXGR1, CA12, SLC4A1, AQP6 and IC-specific transcription factor FOXI1. Also regulates the expression of JAG1 and subsequent notch signaling in the collecting duct. JAG1 initiates notch signaling in PCs but inhibits notch signaling in ICs. Acts as a transcriptional suppressor that may suppress UBP1-mediated transcriptional activation. Modulates the placental expression of CYP11A1. The chain is Transcription factor CP2-like protein 1 (TFCP2L1) from Pongo abelii (Sumatran orangutan).